The following is a 196-amino-acid chain: Cyclin-dependent kinase inhibitor 6 (196 aa).

2 disordered regions span residues 1-36 (MSER…PDSH) and 55-151 (ASDE…RKTP). Residues 124 to 139 (SEGLGETTTEMESSSA) are compositionally biased toward low complexity. At threonine 152 the chain carries Phosphothreonine; by KIN10.

This sequence belongs to the CDI family. ICK/KRP subfamily. Specifically interacts with CDKA-1, but not with CDKB1-1. Interacts with CYCD1-1, CYCD4-1 and RHF1A. Binds to FBL17. Interacts with KIN10. Interacts with CYCD3-1. In terms of processing, ubiquitinated by RHF1A and SCF(FBL17). Ubiquitination leads to its subsequent degradation, thus controlling cell cycle progression. The phosphorylation at Thr-152 by KIN10 represses its activity. Expressed in newly formed organs such as the shoot apex. Expressed in cotyledon, primary root and marginal region of the leaves as well as in developing pollen.

Its subcellular location is the nucleus. The protein localises to the nucleoplasm. With respect to regulation, down-regulated by KIN10 under a phosphorylation-dependent manner. Binds and inhibits CYCD2-1/CDKA-1 complex kinase activity. Regulates cell division which is crucial for plant growth, development and morphogenesis. May inhibit CDK kinases specifically involved in the G1/S phase transition. The protein is Cyclin-dependent kinase inhibitor 6 (KRP6) of Arabidopsis thaliana (Mouse-ear cress).